A 221-amino-acid polypeptide reads, in one-letter code: ATP synthase subunit a 1 (221 aa).

The next 5 membrane-spanning stretches (helical) occupy residues 20 to 40, 78 to 98, 108 to 128, 174 to 194, and 196 to 216; these read LTIVTTWALMLLLAGGSALIT, YLPFIAALFLFIATANLCTVI, LSTTAALALSVFIAVPLFGIA, MILVILLTISPLVFPVLMNIL, and LLTGMVQAYIFSILATVYIAA.

Belongs to the ATPase A chain family. F-type ATPases have 2 components, CF(1) - the catalytic core - and CF(0) - the membrane proton channel. CF(1) has five subunits: alpha(3), beta(3), gamma(1), delta(1), epsilon(1). CF(0) has four main subunits: a, b, b' and c.

Its subcellular location is the cell inner membrane. In terms of biological role, key component of the proton channel; it plays a direct role in the translocation of protons across the membrane. This chain is ATP synthase subunit a 1, found in Chlorobaculum tepidum (strain ATCC 49652 / DSM 12025 / NBRC 103806 / TLS) (Chlorobium tepidum).